The sequence spans 206 residues: Ras-related protein Rab7 (206 aa).

GTP is bound by residues 15–22 (GDSGVGKT), 63–67 (DTAGQ), and 125–128 (NKID). S-geranylgeranyl cysteine attachment occurs at residues Cys204 and Cys206. The residue at position 206 (Cys206) is a Cysteine methyl ester.

Belongs to the small GTPase superfamily. Rab family.

It is found in the cell membrane. Functionally, protein transport. Probably involved in vesicular traffic. The chain is Ras-related protein Rab7 from Pisum sativum (Garden pea).